Reading from the N-terminus, the 53-residue chain is Large ribosomal subunit protein eL40 (53 aa).

This sequence belongs to the eukaryotic ribosomal protein eL40 family.

The polypeptide is Large ribosomal subunit protein eL40 (Pyrobaculum arsenaticum (strain DSM 13514 / JCM 11321 / PZ6)).